The primary structure comprises 76 residues: VpAmp1.0 (76 aa).

The signal sequence occupies residues 1 to 22 (MKLINLVPVFFVLIIVVDYCHS). Ile41 is subject to Isoleucine amide. A propeptide spanning residues 42 to 76 (GKRSVESQRYVDLNRRDLEQDLQELQDFLDQISEH) is cleaved from the precursor.

It belongs to the non-disulfide-bridged peptide (NDBP) superfamily. Short antimicrobial peptide (group 4) family. Expressed by the venom gland.

Its subcellular location is the secreted. The protein localises to the target cell membrane. Its function is as follows. Antimicrobial peptide with potent activity against Gram-positive bacteria S.aureus (MIC=2.5 uM) and S.agalactiaea (MIC=2.5 uM), and Gram-negative bacteria E.coli (MIC=24 uM) and P.aeruginosa (MIC=2.5 uM), as well as against yeasts Candida albicans (MIC=6.25 uM) and C.glabrata (MIC&gt;50 uM). Also elicits high hemolysis on human erythrocytes (HC(50)=9.2 uM). The polypeptide is VpAmp1.0 (Mesomexovis punctatus (Scorpion)).